Consider the following 412-residue polypeptide: CCA-adding enzyme (412 aa).

ATP is bound by residues serine 41 and lysine 44. The CTP site is built by serine 41 and lysine 44. Mg(2+)-binding residues include aspartate 53, aspartate 55, and aspartate 106. Histidine 129, lysine 149, and tyrosine 158 together coordinate ATP. CTP contacts are provided by histidine 129, lysine 149, and tyrosine 158.

Belongs to the tRNA nucleotidyltransferase/poly(A) polymerase family. Archaeal CCA-adding enzyme subfamily. Homodimer. Requires Mg(2+) as cofactor.

It carries out the reaction a tRNA precursor + 2 CTP + ATP = a tRNA with a 3' CCA end + 3 diphosphate. The enzyme catalyses a tRNA with a 3' CCA end + 2 CTP + ATP = a tRNA with a 3' CCACCA end + 3 diphosphate. In terms of biological role, catalyzes the addition and repair of the essential 3'-terminal CCA sequence in tRNAs without using a nucleic acid template. Adds these three nucleotides in the order of C, C, and A to the tRNA nucleotide-73, using CTP and ATP as substrates and producing inorganic pyrophosphate. tRNA 3'-terminal CCA addition is required both for tRNA processing and repair. Also involved in tRNA surveillance by mediating tandem CCA addition to generate a CCACCA at the 3' terminus of unstable tRNAs. While stable tRNAs receive only 3'-terminal CCA, unstable tRNAs are marked with CCACCA and rapidly degraded. The protein is CCA-adding enzyme of Saccharolobus solfataricus (strain ATCC 35092 / DSM 1617 / JCM 11322 / P2) (Sulfolobus solfataricus).